The chain runs to 91 residues: Large ribosomal subunit protein bL27 (91 aa).

Residues 1–21 are disordered; sequence MAHKKAGGSSRNGRDSESKRL.

It belongs to the bacterial ribosomal protein bL27 family.

The protein is Large ribosomal subunit protein bL27 of Azoarcus sp. (strain BH72).